The following is a 433-amino-acid chain: Trigger factor (433 aa).

The 86-residue stretch at 166–251 folds into the PPIase FKBP-type domain; it reads GDFAVIDFEG…LHEIQERAKP (86 aa).

It belongs to the FKBP-type PPIase family. Tig subfamily.

Its subcellular location is the cytoplasm. The catalysed reaction is [protein]-peptidylproline (omega=180) = [protein]-peptidylproline (omega=0). Its function is as follows. Involved in protein export. Acts as a chaperone by maintaining the newly synthesized protein in an open conformation. Functions as a peptidyl-prolyl cis-trans isomerase. In Aliarcobacter butzleri (strain RM4018) (Arcobacter butzleri), this protein is Trigger factor.